Consider the following 118-residue polypeptide: uncharacterized protein (118 aa).

An N-terminal signal peptide occupies residues 1–18; sequence MSKLIFLFVVATLATIKA. Asn-24 carries N-linked (GlcNAc...) asparagine; by host glycosylation.

This is an uncharacterized protein from Magallana gigas (Pacific oyster).